A 227-amino-acid chain; its full sequence is Cytochrome c oxidase subunit 2 (227 aa).

Topologically, residues Met1 to Ser14 are mitochondrial intermembrane. A helical membrane pass occupies residues Pro15–Met45. Topologically, residues Leu46–Gln58 are mitochondrial matrix. Residues Glu59 to Met86 form a helical membrane-spanning segment. Residues Asp87 to Ser227 lie on the Mitochondrial intermembrane side of the membrane. Residues His160, Cys195, Glu197, Cys199, His203, and Met206 each contribute to the Cu cation site. Position 197 (Glu197) interacts with Mg(2+).

This sequence belongs to the cytochrome c oxidase subunit 2 family. As to quaternary structure, component of the cytochrome c oxidase (complex IV, CIV), a multisubunit enzyme composed of 14 subunits. The complex is composed of a catalytic core of 3 subunits MT-CO1, MT-CO2 and MT-CO3, encoded in the mitochondrial DNA, and 11 supernumerary subunits COX4I, COX5A, COX5B, COX6A, COX6B, COX6C, COX7A, COX7B, COX7C, COX8 and NDUFA4, which are encoded in the nuclear genome. The complex exists as a monomer or a dimer and forms supercomplexes (SCs) in the inner mitochondrial membrane with NADH-ubiquinone oxidoreductase (complex I, CI) and ubiquinol-cytochrome c oxidoreductase (cytochrome b-c1 complex, complex III, CIII), resulting in different assemblies (supercomplex SCI(1)III(2)IV(1) and megacomplex MCI(2)III(2)IV(2)). Found in a complex with TMEM177, COA6, COX18, COX20, SCO1 and SCO2. Interacts with TMEM177 in a COX20-dependent manner. Interacts with COX20. Interacts with COX16. Cu cation serves as cofactor.

The protein resides in the mitochondrion inner membrane. The catalysed reaction is 4 Fe(II)-[cytochrome c] + O2 + 8 H(+)(in) = 4 Fe(III)-[cytochrome c] + 2 H2O + 4 H(+)(out). Its function is as follows. Component of the cytochrome c oxidase, the last enzyme in the mitochondrial electron transport chain which drives oxidative phosphorylation. The respiratory chain contains 3 multisubunit complexes succinate dehydrogenase (complex II, CII), ubiquinol-cytochrome c oxidoreductase (cytochrome b-c1 complex, complex III, CIII) and cytochrome c oxidase (complex IV, CIV), that cooperate to transfer electrons derived from NADH and succinate to molecular oxygen, creating an electrochemical gradient over the inner membrane that drives transmembrane transport and the ATP synthase. Cytochrome c oxidase is the component of the respiratory chain that catalyzes the reduction of oxygen to water. Electrons originating from reduced cytochrome c in the intermembrane space (IMS) are transferred via the dinuclear copper A center (CU(A)) of subunit 2 and heme A of subunit 1 to the active site in subunit 1, a binuclear center (BNC) formed by heme A3 and copper B (CU(B)). The BNC reduces molecular oxygen to 2 water molecules using 4 electrons from cytochrome c in the IMS and 4 protons from the mitochondrial matrix. In Coturnix japonica (Japanese quail), this protein is Cytochrome c oxidase subunit 2 (MT-CO2).